The sequence spans 477 residues: Leukotoxin export protein LtxD (477 aa).

Residues 64–84 traverse the membrane as a helical segment; that stretch reads IMLFLTLAIIVSIFSNVEIIA. Residues 206 to 287 are a coiled coil; sequence LNLNKKEAEK…ENEVLLAKEE (82 aa).

It belongs to the membrane fusion protein (MFP) (TC 8.A.1) family. As to quaternary structure, probably part of a complex composed of LtxB, LtxD and TdeA, which forms a single transport channel across the two membranes.

It localises to the cell inner membrane. Functionally, involved in the export of the LtxA leukotoxin. The sequence is that of Leukotoxin export protein LtxD from Aggregatibacter actinomycetemcomitans (Actinobacillus actinomycetemcomitans).